The primary structure comprises 242 residues: UPF0273 protein TM_0370 (242 aa).

Residues 3–242 (KRVKTGIPGM…IYPSEGGEGR (240 aa)) form the KaiC domain. ATP is bound at residue 30–37 (GGPGTGKT).

Belongs to the UPF0273 family.

This Thermotoga maritima (strain ATCC 43589 / DSM 3109 / JCM 10099 / NBRC 100826 / MSB8) protein is UPF0273 protein TM_0370.